We begin with the raw amino-acid sequence, 433 residues long: MRVLLACLLVCALVVSDSDGSNEVHKESGESNCGCLNGGKCVTYKYFSNIQRCSCPKKFQGEHCEIDTSKTCYQGNGHSYRGKANRDLSGRPCLAWDSPTVLLKMYHAHRSDAIQLGLGKHNYCRNPDNQRRPWCYVQIGLKQFVQFCMVQDCSVGKSPSSPREKEEFQCGQKALRPRFKIVGGQVTNAENQPWFAAIYRRHRGGSITYLCGGSLISPCWVVSATHCFIDHPKKENYIVYLGQSRLNSDTRGEMQFEVEKLILHEDYSAESLAHHNDIALLKIRTSRGQCAQPSRSIQTICLPPEHEDAHSRTRCEITGFGKENPSDYRYSDELKMTFVSLVSHEVCQQPHYYGAEVTDKMLCAADPQWETDSCQGDSGGPLVCTIQGRLTLTGIVSWGRDCAMKYKPGVYTRVSKFLPWINTHTRGEINLVL.

Positions 1–20 (MRVLLACLLVCALVVSDSDG) are cleaved as a signal peptide. The EGF-like domain maps to 29–65 (GESNCGCLNGGKCVTYKYFSNIQRCSCPKKFQGEHCE). 6 disulfides stabilise this stretch: Cys33-Cys41, Cys35-Cys53, Cys55-Cys64, Cys72-Cys153, Cys93-Cys135, and Cys124-Cys148. The binds urokinase plasminogen activator surface receptor stretch occupies residues 36–59 (LNGGKCVTYKYFSNIQRCSCPKKF). The region spanning 72 to 153 (CYQGNGHSYR…FVQFCMVQDC (82 aa)) is the Kringle domain. A connecting peptide region spans residues 154–180 (SVGKSPSSPREKEEFQCGQKALRPRFK). Position 160 is a phosphoserine (Ser160). Cystine bridges form between Cys170–Cys301, Cys211–Cys227, Cys219–Cys290, Cys315–Cys384, Cys347–Cys363, and Cys374–Cys402. Positions 181 to 426 (IVGGQVTNAE…FLPWINTHTR (246 aa)) constitute a Peptidase S1 domain. Catalysis depends on charge relay system residues His226 and Asp277. Ser378 serves as the catalytic Charge relay system.

The protein belongs to the peptidase S1 family. In terms of assembly, found in high and low molecular mass forms. Each consists of two chains, A and B. The high molecular mass form contains a long chain A which is cleaved to yield a short chain A. Forms heterodimer with SERPINA5. Binds LRP1B; binding is followed by internalization and degradation. Interacts with MRC2. Interacts with PLAUR. In complex with SERPINE1, interacts with PLAUR/uPAR. Interacts with SORL1 and LRP1, either alone or in complex with SERPINE1; these interactions are abolished in the presence of LRPAP1/RAP. The ternary complex composed of PLAUR-PLAU-PAI1 also interacts with SORLA. Produced as an inactive single-chain protein (pro-uPA or sc-uPA), is processed into the active disulfide-linked two-chain form of PLAU/uPA by a proteolytic event mediated, at least, by TMPRSS4.

Its subcellular location is the secreted. The catalysed reaction is Specific cleavage of Arg-|-Val bond in plasminogen to form plasmin.. Inhibited by SERPINA5. Inhibited by SERPINE1. Specifically cleaves the zymogen plasminogen to form the active enzyme plasmin. The sequence is that of Urokinase-type plasminogen activator (PLAU) from Bos taurus (Bovine).